Here is a 413-residue protein sequence, read N- to C-terminus: Precorrin-6Y C(5,15)-methyltransferase [decarboxylating] (413 aa).

This sequence belongs to the precorrin methyltransferase family.

The catalysed reaction is precorrin-6B + 2 S-adenosyl-L-methionine = precorrin-8X + 2 S-adenosyl-L-homocysteine + CO2 + 3 H(+). It functions in the pathway cofactor biosynthesis; adenosylcobalamin biosynthesis; cob(II)yrinate a,c-diamide from precorrin-2 (aerobic route): step 7/10. In terms of biological role, catalyzes the methylation of both C-5 and C-15 in precorrin-6Y to form precorrin-8X. The chain is Precorrin-6Y C(5,15)-methyltransferase [decarboxylating] (cobL) from Sinorhizobium sp.